Reading from the N-terminus, the 936-residue chain is MLLAPQGRSFSKKRMGLNRWKRFTRKPSPKPTFGPDSVEHWIKRVEKASEFAVSNAFFTRNSDLPRSPWGQITDLKTSEQIEDHDEIYAEAQELVNDWLDTKLKQELASEEEGDAKNTVSSVTIMPEANGHLKYDKFDDLCGYLEEEEESTTVQKFIDHLLHKNVVDSAMMEDLGRKENQDKKQQKDPRLTMEMRHKQVKENRLRREKELEYQRIEKTLKKSAFLEAQCLVQEEKKRKALEAKKEEEEIQREMVKLRREIIERRRTVKAAWKIEKKRQEENSQNSSEKVMFQSTHILPDEEKMVKERKRKLKEVLIQTFKENQQCQKRYFAAWHKLILDHRIKLGKAGTLSDWKIQLKVLRAWRDYTRFQKLERETQALENDLREENRKQQLATEYNRKQVLRHCFTEWQHWHGAELLKRELALTKEETRKKMDALLQAASLGKLSANGLSGISLPEEATAMVGPPVKNGQETAVPPLWEKPPLGSSGCMLSPPLGRTTTGNLQGSLQNVSLSAPGNKQHKTLGAEPSQQPGSNETLRTTSQKAEPLCLGHFHNRHVFQQQLIEKQKKKLQEQQKTILELKKNLQLAEAQWAAEHALAVTEAQSHLLSKPREEEPRTCQMLVNSPVASPGTEGRSDSRNSLSGLRRKPKQLMTPHPILKAMEERAIQRAECRRILAEKKKKQEEEKLAQLKAQEEERQKREAEEKEAQLERKREEKRLKKMKELEKQKRIKRNQQLEAIAKEHYERVLLRKKGLEPWKRLRMQSKQNIQVAEEHYSLFLQRKYMLTWFQRSQESLARKMAQADQFYSQILLKRVIQSWLQYVIDLQEEVRKFCVHFLQKKIFRAWFNMVREVKIDSQGKHEIAAEHSDRRILWITLRTWKKFVKFMKEERVKEERRQQLRRKVVEILPDFQVPGRYHELYQQSDTWSLSKTSLVNE.

Coiled-coil stretches lie at residues 189-270 (RLTM…VKAA) and 364-440 (RDYT…LQAA). Residues 495-541 (LGRTTTGNLQGSLQNVSLSAPGNKQHKTLGAEPSQQPGSNETLRTTS) form a disordered region. Composition is skewed to polar residues over residues 497–516 (RTTT…SAPG) and 527–541 (PSQQ…RTTS). Residues 554 to 592 (NRHVFQQQLIEKQKKKLQEQQKTILELKKNLQLAEAQWA) adopt a coiled-coil conformation. Disordered regions lie at residues 607 to 656 (LSKP…TPHP) and 691 to 714 (KAQE…RKRE). Positions 662–739 (EERAIQRAEC…IKRNQQLEAI (78 aa)) form a coiled coil.

The chain is Coiled-coil domain-containing protein 191 (CCDC191) from Homo sapiens (Human).